A 309-amino-acid chain; its full sequence is Peptide methionine sulfoxide reductase MsrA/MsrB (309 aa).

The peptide methionine sulfoxide reductase A stretch occupies residues 1-153 (MIYLAEGCFW…PNGYCHIDIN (153 aa)). The active site involves cysteine 8. A MsrB domain is found at 170–293 (ATEIKAKLSA…NSLSITFIPK (124 aa)). Cysteine 282 functions as the Nucleophile in the catalytic mechanism.

The protein in the N-terminal section; belongs to the MsrA Met sulfoxide reductase family. This sequence in the C-terminal section; belongs to the MsrB Met sulfoxide reductase family.

It carries out the reaction L-methionyl-[protein] + [thioredoxin]-disulfide + H2O = L-methionyl-(S)-S-oxide-[protein] + [thioredoxin]-dithiol. The catalysed reaction is [thioredoxin]-disulfide + L-methionine + H2O = L-methionine (S)-S-oxide + [thioredoxin]-dithiol. The enzyme catalyses L-methionyl-[protein] + [thioredoxin]-disulfide + H2O = L-methionyl-(R)-S-oxide-[protein] + [thioredoxin]-dithiol. In terms of biological role, has an important function as a repair enzyme for proteins that have been inactivated by oxidation. Catalyzes the reversible oxidation-reduction of methionine sulfoxide in proteins to methionine. The protein is Peptide methionine sulfoxide reductase MsrA/MsrB (msrAB) of Streptococcus pyogenes serotype M3 (strain ATCC BAA-595 / MGAS315).